The chain runs to 231 residues: 5'-methylthioadenosine/S-adenosylhomocysteine nucleosidase (231 aa).

Glutamate 12 functions as the Proton acceptor in the catalytic mechanism. Substrate is bound by residues glycine 78, methionine 153, and 174-175 (ME). Catalysis depends on aspartate 198, which acts as the Proton donor.

The protein belongs to the PNP/UDP phosphorylase family. MtnN subfamily.

The enzyme catalyses S-adenosyl-L-homocysteine + H2O = S-(5-deoxy-D-ribos-5-yl)-L-homocysteine + adenine. It catalyses the reaction S-methyl-5'-thioadenosine + H2O = 5-(methylsulfanyl)-D-ribose + adenine. It carries out the reaction 5'-deoxyadenosine + H2O = 5-deoxy-D-ribose + adenine. Its pathway is amino-acid biosynthesis; L-methionine biosynthesis via salvage pathway; S-methyl-5-thio-alpha-D-ribose 1-phosphate from S-methyl-5'-thioadenosine (hydrolase route): step 1/2. In terms of biological role, catalyzes the irreversible cleavage of the glycosidic bond in both 5'-methylthioadenosine (MTA) and S-adenosylhomocysteine (SAH/AdoHcy) to adenine and the corresponding thioribose, 5'-methylthioribose and S-ribosylhomocysteine, respectively. Also cleaves 5'-deoxyadenosine, a toxic by-product of radical S-adenosylmethionine (SAM) enzymes, into 5-deoxyribose and adenine. The protein is 5'-methylthioadenosine/S-adenosylhomocysteine nucleosidase of Bacillus cereus (strain B4264).